The following is a 92-amino-acid chain: Small ribosomal subunit protein uS19c (92 aa).

Belongs to the universal ribosomal protein uS19 family.

The protein resides in the plastid. The protein localises to the chloroplast. Functionally, protein S19 forms a complex with S13 that binds strongly to the 16S ribosomal RNA. The protein is Small ribosomal subunit protein uS19c of Lactuca sativa (Garden lettuce).